The chain runs to 66 residues: UPF0337 protein SAG0606 (66 aa).

Basic and acidic residues predominate over residues 1-10 (MSQEKLKSKV). The tract at residues 1–23 (MSQEKLKSKVEQASGSLKEGAGK) is disordered.

It belongs to the UPF0337 (CsbD) family.

This is UPF0337 protein SAG0606 from Streptococcus agalactiae serotype V (strain ATCC BAA-611 / 2603 V/R).